A 175-amino-acid polypeptide reads, in one-letter code: Large ribosomal subunit protein uL5 (175 aa).

The protein belongs to the universal ribosomal protein uL5 family. As to quaternary structure, part of the 50S ribosomal subunit; contacts the 5S rRNA and probably tRNA. Forms a bridge to the 30S subunit in the 70S ribosome.

This is one of the proteins that bind and probably mediate the attachment of the 5S RNA into the large ribosomal subunit, where it forms part of the central protuberance. In the 70S ribosome it contacts protein S13 of the 30S subunit (bridge B1b), connecting the 2 subunits; this bridge is implicated in subunit movement. May contact the P site tRNA; the 5S rRNA and some of its associated proteins might help stabilize positioning of ribosome-bound tRNAs. In Halobacterium salinarum (strain ATCC 29341 / DSM 671 / R1), this protein is Large ribosomal subunit protein uL5.